The chain runs to 542 residues: Glutamyl-tRNA(Gln) amidotransferase subunit A, mitochondrial (542 aa).

Active-site charge relay system residues include Lys-55 and Ser-143. Ser-167 acts as the Acyl-ester intermediate in catalysis.

Belongs to the amidase family. GatA subfamily. In terms of assembly, subunit of the heterotrimeric GatCAB amidotransferase (AdT) complex, composed of A, B and C subunits.

Its subcellular location is the mitochondrion. It catalyses the reaction L-glutamyl-tRNA(Gln) + L-glutamine + ATP + H2O = L-glutaminyl-tRNA(Gln) + L-glutamate + ADP + phosphate + H(+). In terms of biological role, allows the formation of correctly charged Gln-tRNA(Gln) through the transamidation of misacylated Glu-tRNA(Gln) in the mitochondria. The reaction takes place in the presence of glutamine and ATP through an activated gamma-phospho-Glu-tRNA(Gln). This is Glutamyl-tRNA(Gln) amidotransferase subunit A, mitochondrial from Neurospora crassa (strain ATCC 24698 / 74-OR23-1A / CBS 708.71 / DSM 1257 / FGSC 987).